A 565-amino-acid chain; its full sequence is Sulfite reductase [NADPH] hemoprotein beta-component (565 aa).

Residues C429, C435, C474, and C478 each coordinate [4Fe-4S] cluster. Siroheme is bound at residue C478.

The protein belongs to the nitrite and sulfite reductase 4Fe-4S domain family. In terms of assembly, alpha(8)-beta(8). The alpha component is a flavoprotein, the beta component is a hemoprotein. The cofactor is siroheme. Requires [4Fe-4S] cluster as cofactor.

It carries out the reaction hydrogen sulfide + 3 NADP(+) + 3 H2O = sulfite + 3 NADPH + 4 H(+). Its pathway is sulfur metabolism; hydrogen sulfide biosynthesis; hydrogen sulfide from sulfite (NADPH route): step 1/1. Component of the sulfite reductase complex that catalyzes the 6-electron reduction of sulfite to sulfide. This is one of several activities required for the biosynthesis of L-cysteine from sulfate. The polypeptide is Sulfite reductase [NADPH] hemoprotein beta-component (Shewanella baltica (strain OS223)).